A 22-amino-acid polypeptide reads, in one-letter code: NDMA-dependent alcohol dehydrogenase (22 aa).

It belongs to the zinc-containing alcohol dehydrogenase family. Homotetramer. NADH serves as cofactor.

The protein resides in the cytoplasm. It catalyses the reaction N,N-dimethyl-4-nitrosoaniline + a primary alcohol = 4-(hydroxylamino)-N,N-dimethylaniline + an aldehyde. The enzyme catalyses ethanol + A = acetaldehyde + AH2. Functionally, this is a novel enzyme, catalytically different from common alcohol dehydrogenases. It is effective in oxidizing ethanol, other primary alcohols and benzylalcohol only in the presence of p-nitroso-N,N-dimethylaniline (NDMA) as an electron acceptor. NADH acts as a cofactor here instead of as a coenzyme. This is NDMA-dependent alcohol dehydrogenase from Rhodococcus erythropolis (Arthrobacter picolinophilus).